Reading from the N-terminus, the 324-residue chain is Tumor necrosis factor receptor superfamily member 6 (324 aa).

The signal sequence occupies residues 1-21 (MLWIMAVLPLVLAGPELNVRM). At 22 to 171 (QGTDSIFEGL…CKKQSSNYKL (150 aa)) the chain is on the extracellular side. A glycan (N-linked (GlcNAc...) asparagine) is linked at N43. 3 TNFR-Cys repeats span residues 43–79 (NCSE…PTCH), 80–123 (PCTE…NTKC), and 124–163 (RCKE…TKCK). 9 disulfide bridges follow: C44–C55, C56–C69, C59–C78, C81–C97, C100–C115, C103–C123, C125–C139, C142–C154, and C145–C162. N-linked (GlcNAc...) asparagine glycosylation is found at N114 and N132. Residues 172–188 (LWLLILPGLAILFVFIY) form a helical membrane-spanning segment. Over 189–324 (KRYRKRQPGD…RNENEGQSLE (136 aa)) the chain is Cytoplasmic. The tract at residues 201-306 (SGIPSPESVP…EEIQAMVWED (106 aa)) is interaction with HIPK3. S214 is subject to Phosphoserine. Residues 219-243 (NKYIWRTAEKMKICDAKKFARQHKI) form an interaction with CALM region. The region spanning 219–303 (NKYIWRTAEK…DIAEEIQAMV (85 aa)) is the Death domain.

In terms of assembly, component of the death-induced signaling complex (DISC) composed of cell surface receptor FAS/CD95, adapter protein FADD and the CASP8 protease; recruitment of CASP8 to the complex is required for processing of CASP8 into the p18 and p10 subunits. Interacts directly (via DED domain) with NOL3 (via CARD domain); inhibits death-inducing signaling complex (DISC) assembly by inhibiting the increase in FAS-FADD binding induced by FAS activation. Binds DAXX. Interacts with HIPK3. Part of a complex containing HIPK3 and FADD. Binds RIPK1 and FAIM2. Interacts with BABAM2 and FEM1B. Interacts with CALM. In the absence of stimulation, interacts with BIRC2, DDX3X and GSK3B. The interaction with BIRC2 and DDX3X is further enhanced upon receptor stimulation and accompanied by DDX3X and BIRC2 cleavage. Palmitoylated. Palmitoylation by ZDHHC7 prevents the lysosomal degradation of FAS regulating its expression at the plasma membrane.

The protein resides in the cell membrane. The protein localises to the membrane raft. In terms of biological role, receptor for TNFSF6/FASLG. The adapter molecule FADD recruits caspase CASP8 to the activated receptor. The resulting death-inducing signaling complex (DISC) performs CASP8 proteolytic activation which initiates the subsequent cascade of caspases (aspartate-specific cysteine proteases) mediating apoptosis. FAS-mediated apoptosis may have a role in the induction of peripheral tolerance, in the antigen-stimulated suicide of mature T-cells, or both. The polypeptide is Tumor necrosis factor receptor superfamily member 6 (Fas) (Rattus norvegicus (Rat)).